A 438-amino-acid chain; its full sequence is 3-phosphoshikimate 1-carboxyvinyltransferase (438 aa).

Residues Lys-21, Ser-22, and Arg-26 each coordinate 3-phosphoshikimate. Lys-21 provides a ligand contact to phosphoenolpyruvate. The phosphoenolpyruvate site is built by Gly-95 and Arg-123. Residues Ser-167, Gln-169, Asp-315, and Lys-342 each contribute to the 3-phosphoshikimate site. Gln-169 contacts phosphoenolpyruvate. The Proton acceptor role is filled by Asp-315. Arg-346 and Arg-387 together coordinate phosphoenolpyruvate.

The protein belongs to the EPSP synthase family. As to quaternary structure, monomer.

Its subcellular location is the cytoplasm. The enzyme catalyses 3-phosphoshikimate + phosphoenolpyruvate = 5-O-(1-carboxyvinyl)-3-phosphoshikimate + phosphate. Its pathway is metabolic intermediate biosynthesis; chorismate biosynthesis; chorismate from D-erythrose 4-phosphate and phosphoenolpyruvate: step 6/7. In terms of biological role, catalyzes the transfer of the enolpyruvyl moiety of phosphoenolpyruvate (PEP) to the 5-hydroxyl of shikimate-3-phosphate (S3P) to produce enolpyruvyl shikimate-3-phosphate and inorganic phosphate. This Coxiella burnetii (strain RSA 331 / Henzerling II) protein is 3-phosphoshikimate 1-carboxyvinyltransferase.